The sequence spans 401 residues: Chorismate synthase (401 aa).

The NADP(+) site is built by arginine 40 and arginine 46. FMN-binding positions include 135–137, 256–257, glycine 300, 315–319, and arginine 341; these read RAS, QA, and KPIST.

Belongs to the chorismate synthase family. Homotetramer. FMNH2 serves as cofactor.

The catalysed reaction is 5-O-(1-carboxyvinyl)-3-phosphoshikimate = chorismate + phosphate. The protein operates within metabolic intermediate biosynthesis; chorismate biosynthesis; chorismate from D-erythrose 4-phosphate and phosphoenolpyruvate: step 7/7. In terms of biological role, catalyzes the anti-1,4-elimination of the C-3 phosphate and the C-6 proR hydrogen from 5-enolpyruvylshikimate-3-phosphate (EPSP) to yield chorismate, which is the branch point compound that serves as the starting substrate for the three terminal pathways of aromatic amino acid biosynthesis. This reaction introduces a second double bond into the aromatic ring system. The protein is Chorismate synthase of Mycobacterium avium (strain 104).